The chain runs to 138 residues: Membrane glycoprotein UL139 (138 aa).

The signal sequence occupies residues 1–15; that stretch reads MLWILVLFALAASAS. The segment at 17–37 is disordered; sequence TTTGTSSNSSQSTSAGTTNTT. Residues 64 to 84 form a helical membrane-spanning segment; sequence GWTLSGLLLIFTCCLCCFWLV. The span at 113–129 shows a compositional bias: polar residues; it reads SDATLPMGTTGSYTPPQ. Residues 113 to 138 are disordered; it reads SDATLPMGTTGSYTPPQDGSFPPPPR.

It is found in the host membrane. The chain is Membrane glycoprotein UL139 (UL139) from Homo sapiens (Human).